Consider the following 362-residue polypeptide: S-adenosylmethionine-dependent nucleotide dehydratase RSAD2 (362 aa).

The tract at residues Glu-47–Pro-73 is disordered. Over residues Asp-64–Pro-73 the composition is skewed to polar residues. Positions Pro-70 to Leu-290 constitute a Radical SAM core domain. [4Fe-4S] cluster contacts are provided by Cys-84, Cys-88, and Cys-91. Lys-198 carries the post-translational modification N6-acetyllysine. A Glycyl lysine isopeptide (Lys-Gly) (interchain with G-Cter in ubiquitin) cross-link involves residue Lys-207.

This sequence belongs to the radical SAM superfamily. RSAD2 family. Homodimer. Interacts with IRAK1 and TRAF6. Interacts with FPPS. Interacts with HADHB. Interacts (via C-terminus) with VAPA/VAP33 (via C-terminus). It depends on [4Fe-4S] cluster as a cofactor. In terms of processing, acetylated by HAT1. HAT1-mediated acetylation of Lys-198 in turn recruits UBE4A that stimulates RSAD2 polyubiquitination leading to proteasomal degradation. 'Lys-6'-linked polyubiquitination at Lys-207 leads to RSAD2 protein degradation. In terms of tissue distribution, expressed at higher levels in atherosclerotic arteries than in normal arteries.

Its subcellular location is the endoplasmic reticulum membrane. The protein localises to the golgi apparatus. The protein resides in the endoplasmic reticulum. It localises to the lipid droplet. It is found in the mitochondrion. Its subcellular location is the mitochondrion inner membrane. The protein localises to the mitochondrion outer membrane. It catalyses the reaction CTP + AH2 + S-adenosyl-L-methionine = 3'-deoxy-3',4'-didehydro-CTP + 5'-deoxyadenosine + L-methionine + A + H2O + H(+). Its activity is regulated as follows. IRAK1 and TRAF6 synergistically activate RSAD2 increasing its activity with CTP as substrate about 10-fold. Interferon-inducible antiviral protein which plays a major role in the cell antiviral state induced by type I and type II interferon. Catalyzes the conversion of cytidine triphosphate (CTP) to 3'-deoxy-3',4'-didehydro-CTP (ddhCTP) via a SAM-dependent radical mechanism. In turn, ddhCTP acts as a chain terminator for the RNA-dependent RNA polymerases from multiple viruses and directly inhibits viral replication. Therefore, inhibits a wide range of DNA and RNA viruses. Also promotes TLR7 and TLR9-dependent production of IFN-beta production in plasmacytoid dendritic cells (pDCs) by facilitating 'Lys-63'-linked ubiquitination of IRAK1 by TRAF6. Plays a role in CD4+ T-cells activation and differentiation. Facilitates T-cell receptor (TCR)-mediated GATA3 activation and optimal T-helper 2 (Th2) cytokine production by modulating NFKB1 and JUNB activities. Can inhibit secretion of soluble proteins. The polypeptide is S-adenosylmethionine-dependent nucleotide dehydratase RSAD2 (Mus musculus (Mouse)).